Consider the following 131-residue polypeptide: Small ribosomal subunit protein eS6 (131 aa).

Residues alanine 76–glycine 95 form a disordered region. A compositionally biased stretch (basic residues) spans lysine 81–valine 93.

The protein belongs to the eukaryotic ribosomal protein eS6 family.

The polypeptide is Small ribosomal subunit protein eS6 (Methanocaldococcus jannaschii (strain ATCC 43067 / DSM 2661 / JAL-1 / JCM 10045 / NBRC 100440) (Methanococcus jannaschii)).